Reading from the N-terminus, the 93-residue chain is Cell division protein FtsB (93 aa).

The Cytoplasmic segment spans residues 1–3 (MRL). A helical membrane pass occupies residues 4–21 (FILVLTLLFGWLQYTLWF). Residues 22–93 (GKNGVSDYYT…FYRIVGEENQ (72 aa)) are Periplasmic-facing. Residues 42–75 (VNTKLQARNSEMYAEIDDLKQGLDAIEERARHEL) adopt a coiled-coil conformation.

It belongs to the FtsB family. Part of a complex composed of FtsB, FtsL and FtsQ.

It is found in the cell inner membrane. In terms of biological role, essential cell division protein. May link together the upstream cell division proteins, which are predominantly cytoplasmic, with the downstream cell division proteins, which are predominantly periplasmic. This Vibrio vulnificus (strain YJ016) protein is Cell division protein FtsB.